A 457-amino-acid polypeptide reads, in one-letter code: MEGCTKDGAAVQSSGASTAGSIFWWLKDRSLGRGICVDPARDNFRTMTSLYSSIHPADSVNLSTRTHGAVFNLEYSPDGSVLTLACEQTEVLLFDPLSSKHIKTLSEAHEDCVNNIRFLDNRMFATCSDDTTIALWDLRKLNSKACTLHGHTSWVKNIEYDKNTRLLVTSGFDGNVIIWDTNRCTEDGCPHKKFFHTRFLMRMRLTPDCSKMLISTSSGYLLILHELDLTKSLEVGSYPILRARRTASTSDMTSTSSETRPSSSPCHNSDSGPLFEKHMSRSSQREGTSPRNSLEVLTPEVPGERDRGNCITSLQLHPKGWATLLRCSSNTDDQEWTCVYEFQEGTPVRQVSPRCSLRLTHYIEEANVGRGYIKELCFSPDGRMIASPHGYGIRLLGFDSQCKELVDCLPKEAGTLQEIRSLYSHKDVVLTTKFSPTHCQIASGCLSGRVSLYQPKF.

WD repeat units follow at residues 65-104, 108-146, 150-189, and 195-234; these read RTHG…HIKT, AHED…SKAC, GHTS…EDGC, and FHTR…KSLE. Over residues 246–265 the composition is skewed to low complexity; sequence TASTSDMTSTSSETRPSSSP. Positions 246–304 are disordered; the sequence is TASTSDMTSTSSETRPSSSPCHNSDSGPLFEKHMSRSSQREGTSPRNSLEVLTPEVPGE. Residues 281 to 292 show a composition bias toward polar residues; sequence RSSQREGTSPRN. WD repeat units lie at residues 306–346, 368–406, and 424–457; these read DRGN…QEGT, VGRG…KELV, and SHKD…QPKF.

Belongs to the WD repeat DCAF10 family.

The protein operates within protein modification; protein ubiquitination. May function as a substrate receptor for CUL4-DDB1 E3 ubiquitin-protein ligase complex. This is DDB1- and CUL4-associated factor 10 (dcaf10) from Xenopus laevis (African clawed frog).